We begin with the raw amino-acid sequence, 328 residues long: DNA-directed RNA polymerase subunit alpha (328 aa).

The alpha N-terminal domain (alpha-NTD) stretch occupies residues 1-234 (MQGSVTEFLK…EQLDAFVDLR (234 aa)). Residues 248–328 (FXPILLRPVD…NWPPASIAED (81 aa)) are alpha C-terminal domain (alpha-CTD).

The protein belongs to the RNA polymerase alpha chain family. Homodimer. The RNAP catalytic core consists of 2 alpha, 1 beta, 1 beta' and 1 omega subunit. When a sigma factor is associated with the core the holoenzyme is formed, which can initiate transcription.

The enzyme catalyses RNA(n) + a ribonucleoside 5'-triphosphate = RNA(n+1) + diphosphate. Functionally, DNA-dependent RNA polymerase catalyzes the transcription of DNA into RNA using the four ribonucleoside triphosphates as substrates. The polypeptide is DNA-directed RNA polymerase subunit alpha (Haemophilus influenzae (strain ATCC 51907 / DSM 11121 / KW20 / Rd)).